The primary structure comprises 159 residues: MGRFLFVASSACWFVFLSLSGAKGNNCPQDWLPMNGLCYKIFNELKAWKDAEMFCRKYKPGCHLASIHLYGESPEIAEYISDYHKGQSEVWIGLCDKKKDFSWEWTDRSCTDYLSWDKNQPDHYQNKEFCVELVSNTGYRLWNDQVCESKNAFLCQCKF.

A signal peptide spans 1-24 (MGRFLFVASSACWFVFLSLSGAKG). 4 cysteine pairs are disulfide-bonded: cysteine 27-cysteine 38, cysteine 55-cysteine 155, cysteine 62-cysteine 157, and cysteine 130-cysteine 147. Residues 34 to 156 (MNGLCYKIFN…CESKNAFLCQ (123 aa)) enclose the C-type lectin domain. Residues glutamine 120, aspartate 122, glutamate 128, asparagine 143, and aspartate 144 each coordinate Ca(2+). The short motif at 120–122 (QPD) is the Galactose-binding element.

It belongs to the true venom lectin family. As to quaternary structure, homodecamer of disulfide-linked dimers arranged in two 5-fold symmetric pentamers. Binds the gentamicin group of aminoglycoside antibiotics at the dimeric interface near the intermolecular disulfide bond. Expressed by the venom gland.

The protein localises to the secreted. Hemagglutination activity is inhibited by lactose (MIC=2.5 mM), galactose (MIC=10 mM), and raffinose. Is very weakly or not inhibited by gentamicin, kanamycin, glucose and sucrose. Its function is as follows. Galactose-binding lectin which recognizes specific carbohydrate structures and agglutinates a variety of animal cells by binding to cell-surface glycoproteins and glycolipids. Calcium-dependent lectin. Also binds lactose and raffinose. Shows high hemagglutinating activity on mammalian erythrocytes. It also involved in immunological functions, since it is able of inducing potent neutrophil activation. In vivo, it causes edema and increases vascular permeability after injection into mouse hind paws (10-100 ug/paw). In anesthetized rats, it decreases the blood pressure by approximately 15%, with a rapid return to the resting level. Is an effective inhibitor of cell growth in some cancer cell lines, especially against renal and pancreatic cancer cell lines, human breast and ovarian carcinoma, glioblastoma and a bovine brain microvascular endothelial cell line. The sequence is that of C-type lectin BJcuL from Bothrops jararacussu (Jararacussu).